Here is a 433-residue protein sequence, read N- to C-terminus: Legumain (433 aa).

A signal peptide spans 1–17 (MVWKVAVFLSVALGIGA). N-linked (GlcNAc...) asparagine glycosylation is present at Asn-91. The active site involves His-148. The N-linked (GlcNAc...) asparagine glycan is linked to Asn-167. The active-site Nucleophile is Cys-189. N-linked (GlcNAc...) asparagine glycans are attached at residues Asn-263 and Asn-272. The propeptide occupies 324-433 (DLEESRQLTE…SMDHVCLGHY (110 aa)). 2 cysteine pairs are disulfide-bonded: Cys-378-Cys-412 and Cys-390-Cys-429.

It belongs to the peptidase C13 family. Homodimer before autocatalytic removal of the propeptide. Monomer after autocatalytic processing. May interact with integrins. Post-translationally, activated by autocatalytic processing at pH 4. Ubiquitous. Particularly abundant in kidney, heart and placenta.

The protein resides in the lysosome. It catalyses the reaction Hydrolysis of proteins and small molecule substrates at -Asn-|-Xaa- bonds.. With respect to regulation, inhibited by CST6. Has a strict specificity for hydrolysis of asparaginyl bonds. Can also cleave aspartyl bonds slowly, especially under acidic conditions. Involved in the processing of proteins for MHC class II antigen presentation in the lysosomal/endosomal system. Also involved in MHC class I antigen presentation in cross-presenting dendritic cells by mediating cleavage and maturation of Perforin-2 (MPEG1), thereby promoting antigen translocation in the cytosol. Required for normal lysosomal protein degradation in renal proximal tubules. Required for normal degradation of internalized EGFR. Plays a role in the regulation of cell proliferation via its role in EGFR degradation. The protein is Legumain of Homo sapiens (Human).